The primary structure comprises 602 residues: Elongation factor 4 (602 aa).

Residues 7 to 189 (SKIRNFCIIA…AIVRRVPPPQ (183 aa)) form the tr-type G domain. Residues 19-24 (DHGKST) and 136-139 (NKVD) contribute to the GTP site.

This sequence belongs to the TRAFAC class translation factor GTPase superfamily. Classic translation factor GTPase family. LepA subfamily.

It localises to the cell inner membrane. The catalysed reaction is GTP + H2O = GDP + phosphate + H(+). In terms of biological role, required for accurate and efficient protein synthesis under certain stress conditions. May act as a fidelity factor of the translation reaction, by catalyzing a one-codon backward translocation of tRNAs on improperly translocated ribosomes. Back-translocation proceeds from a post-translocation (POST) complex to a pre-translocation (PRE) complex, thus giving elongation factor G a second chance to translocate the tRNAs correctly. Binds to ribosomes in a GTP-dependent manner. The protein is Elongation factor 4 of Prochlorococcus marinus (strain MIT 9215).